Consider the following 633-residue polypeptide: DNA topoisomerase 1 (633 aa).

The Toprim domain occupies 6–115 (KKYIVVESPA…KNRIVFSEIT (110 aa)). Mg(2+) is bound by residues glutamate 12 and aspartate 84. One can recognise a Topo IA-type catalytic domain in the interval 130-543 (DMKKVRAQLA…EFYESFSSVF (414 aa)). The interaction with DNA stretch occupies residues 164 to 169 (SAGRVQ). Residue tyrosine 288 is the O-(5'-phospho-DNA)-tyrosine intermediate of the active site. 2 cysteine pairs are disulfide-bonded: cysteine 559–cysteine 578 and cysteine 561–cysteine 580. Residues 559–580 (CSCGKEMRLSFGKYGFYLKCEC) form a C4-type zinc finger. A disordered region spans residues 601 to 633 (LGRKDSESGSPDGRSVEGKGNLSEKRRKGKKGS).

It belongs to the type IA topoisomerase family. As to quaternary structure, monomer. The cofactor is Mg(2+).

The enzyme catalyses ATP-independent breakage of single-stranded DNA, followed by passage and rejoining.. Functionally, releases the supercoiling and torsional tension of DNA, which is introduced during the DNA replication and transcription, by transiently cleaving and rejoining one strand of the DNA duplex. Introduces a single-strand break via transesterification at a target site in duplex DNA. The scissile phosphodiester is attacked by the catalytic tyrosine of the enzyme, resulting in the formation of a DNA-(5'-phosphotyrosyl)-enzyme intermediate and the expulsion of a 3'-OH DNA strand. The free DNA strand then undergoes passage around the unbroken strand, thus removing DNA supercoils. Finally, in the religation step, the DNA 3'-OH attacks the covalent intermediate to expel the active-site tyrosine and restore the DNA phosphodiester backbone. The protein is DNA topoisomerase 1 of Thermotoga maritima (strain ATCC 43589 / DSM 3109 / JCM 10099 / NBRC 100826 / MSB8).